We begin with the raw amino-acid sequence, 340 residues long: Dihydroorotate dehydrogenase (quinone) (340 aa).

Residues 62–66 (AGMDK) and T86 contribute to the FMN site. K66 is a substrate binding site. Residue 111–115 (NRMGF) coordinates substrate. FMN is bound by residues N139 and N172. N172 serves as a coordination point for substrate. S175 (nucleophile) is an active-site residue. N177 is a binding site for substrate. Positions 217 and 245 each coordinate FMN. 246–247 (NT) provides a ligand contact to substrate. Residues G268, G297, and 318–319 (YS) each bind FMN.

The protein belongs to the dihydroorotate dehydrogenase family. Type 2 subfamily. Monomer. The cofactor is FMN.

It localises to the cell membrane. It catalyses the reaction (S)-dihydroorotate + a quinone = orotate + a quinol. It participates in pyrimidine metabolism; UMP biosynthesis via de novo pathway; orotate from (S)-dihydroorotate (quinone route): step 1/1. Catalyzes the conversion of dihydroorotate to orotate with quinone as electron acceptor. This chain is Dihydroorotate dehydrogenase (quinone), found in Shewanella woodyi (strain ATCC 51908 / MS32).